A 192-amino-acid polypeptide reads, in one-letter code: MNMNEFKGVIEGLLFASGDEGVTAKQLSKILDIGLDTVEHILEELRFEYEREDRGLMIIQSNNIFHLATKPEHSSYFKRLIDSPRTSKMSQAALETLAIIAYRQPITRAEIDEIRGVRSERPVQTLITRNLIEETGRKDTVGRPVLFQTSKEFLTFFGLATLDDLPPLPENIDPDKEEREADLFFERFQDEV.

Belongs to the ScpB family. Homodimer. Homodimerization may be required to stabilize the binding of ScpA to the Smc head domains. Component of a cohesin-like complex composed of ScpA, ScpB and the Smc homodimer, in which ScpA and ScpB bind to the head domain of Smc. The presence of the three proteins is required for the association of the complex with DNA.

It is found in the cytoplasm. In terms of biological role, participates in chromosomal partition during cell division. May act via the formation of a condensin-like complex containing Smc and ScpA that pull DNA away from mid-cell into both cell halves. This chain is Segregation and condensation protein B, found in Oceanobacillus iheyensis (strain DSM 14371 / CIP 107618 / JCM 11309 / KCTC 3954 / HTE831).